We begin with the raw amino-acid sequence, 1128 residues long: Major DNA-binding protein (1128 aa).

Residues 1104 to 1128 are required for nuclear localization; it reads LGGGGQGSGGRRKRRLATVLPGLEV.

This sequence belongs to the herpesviridae major DNA-binding protein family. In terms of assembly, homooligomers. Forms double-helical filaments necessary for the formation of replication compartments within the host nucleus. Interacts with the origin-binding protein. Interacts with the helicase primase complex; this interaction stimulates primer synthesis activity of the helicase-primase complex. Interacts with the DNA polymerase. Interacts with the alkaline exonuclease; this interaction increases its nuclease processivity.

It localises to the virion tegument. The protein resides in the host nucleus. Its function is as follows. Plays several crucial roles in viral infection. Participates in the opening of the viral DNA origin to initiate replication by interacting with the origin-binding protein. May disrupt loops, hairpins and other secondary structures present on ssDNA to reduce and eliminate pausing of viral DNA polymerase at specific sites during elongation. Promotes viral DNA recombination by performing strand-transfer, characterized by the ability to transfer a DNA strand from a linear duplex to a complementary single-stranded DNA circle. Can also catalyze the renaturation of complementary single strands. Additionally, reorganizes the host cell nucleus, leading to the formation of prereplicative sites and replication compartments. This process is driven by the protein which can form double-helical filaments in the absence of DNA. This Homo sapiens (Human) protein is Major DNA-binding protein.